A 372-amino-acid polypeptide reads, in one-letter code: Peroxisomal biogenesis factor 3 (372 aa).

Residues 1–15 (MLRSMWNFLKRHKKK) are Cytoplasmic-facing. The tract at residues 1–45 (MLRSMWNFLKRHKKKCIFLGTVLGGVYILGKYGQKKIREIQEREA) is targeting to peroxisomes. The chain crosses the membrane as a helical span at residues 16–36 (CIFLGTVLGGVYILGKYGQKK). The Peroxisomal portion of the chain corresponds to 37–116 (IREIQEREAA…LKIISFTRSI (80 aa)). The helical transmembrane segment at 117 to 140 (VAVYSTCMLVVLLRVQLNIIGGYI) threads the bilayer. The interval 120-136 (YSTCMLVVLLRVQLNII) is interaction with PEX19. Over 141 to 372 (YLDNATVGKN…AFSTPQQLEK (232 aa)) the chain is Cytoplasmic.

Belongs to the peroxin-3 family. In terms of assembly, interacts with PEX19. As to expression, identified in all tissues analyzed, with the strongest expression in liver and in testis.

It is found in the peroxisome membrane. Functionally, involved in peroxisome biosynthesis and integrity. Assembles membrane vesicles before the matrix proteins are translocated. As a docking factor for PEX19, is necessary for the import of peroxisomal membrane proteins in the peroxisomes. This chain is Peroxisomal biogenesis factor 3 (Pex3), found in Mus musculus (Mouse).